A 155-amino-acid chain; its full sequence is Endoribonuclease YbeY (155 aa).

His-118, His-122, and His-128 together coordinate Zn(2+).

Belongs to the endoribonuclease YbeY family. The cofactor is Zn(2+).

The protein resides in the cytoplasm. Its function is as follows. Single strand-specific metallo-endoribonuclease involved in late-stage 70S ribosome quality control and in maturation of the 3' terminus of the 16S rRNA. This is Endoribonuclease YbeY from Bordetella petrii (strain ATCC BAA-461 / DSM 12804 / CCUG 43448).